Consider the following 208-residue polypeptide: Adenylyl-sulfate kinase (208 aa).

Gly-35–Ser-42 contributes to the ATP binding site. Ser-109 (phosphoserine intermediate) is an active-site residue.

The protein belongs to the APS kinase family.

It carries out the reaction adenosine 5'-phosphosulfate + ATP = 3'-phosphoadenylyl sulfate + ADP + H(+). The protein operates within sulfur metabolism; hydrogen sulfide biosynthesis; sulfite from sulfate: step 2/3. In terms of biological role, catalyzes the synthesis of activated sulfate. This is Adenylyl-sulfate kinase from Geotalea uraniireducens (strain Rf4) (Geobacter uraniireducens).